The primary structure comprises 82 residues: Small ribosomal subunit protein bS16 (82 aa).

This sequence belongs to the bacterial ribosomal protein bS16 family.

In Synechocystis sp. (strain ATCC 27184 / PCC 6803 / Kazusa), this protein is Small ribosomal subunit protein bS16.